We begin with the raw amino-acid sequence, 360 residues long: Biotin synthase 2 (360 aa).

One can recognise a Radical SAM core domain in the interval 53–280 (RRVKLNFLVN…TAEVRLSGGR (228 aa)). Cys68, Cys72, and Cys75 together coordinate [4Fe-4S] cluster. [2Fe-2S] cluster-binding residues include Cys112, Cys145, Cys205, and Arg275.

This sequence belongs to the radical SAM superfamily. Biotin synthase family. In terms of assembly, homodimer. [4Fe-4S] cluster is required as a cofactor. It depends on [2Fe-2S] cluster as a cofactor.

The catalysed reaction is (4R,5S)-dethiobiotin + (sulfur carrier)-SH + 2 reduced [2Fe-2S]-[ferredoxin] + 2 S-adenosyl-L-methionine = (sulfur carrier)-H + biotin + 2 5'-deoxyadenosine + 2 L-methionine + 2 oxidized [2Fe-2S]-[ferredoxin]. Its pathway is cofactor biosynthesis; biotin biosynthesis; biotin from 7,8-diaminononanoate: step 2/2. Functionally, catalyzes the conversion of dethiobiotin (DTB) to biotin by the insertion of a sulfur atom into dethiobiotin via a radical-based mechanism. This Frankia casuarinae (strain DSM 45818 / CECT 9043 / HFP020203 / CcI3) protein is Biotin synthase 2.